A 90-amino-acid polypeptide reads, in one-letter code: Large ribosomal subunit protein bL27 (90 aa).

The interval 1-21 (MAHKKAGGSSRNGRDSHGKRL) is disordered.

The protein belongs to the bacterial ribosomal protein bL27 family.

This chain is Large ribosomal subunit protein bL27, found in Nitrobacter winogradskyi (strain ATCC 25391 / DSM 10237 / CIP 104748 / NCIMB 11846 / Nb-255).